A 349-amino-acid chain; its full sequence is Ribosomal RNA small subunit methyltransferase H 1 (349 aa).

S-adenosyl-L-methionine contacts are provided by residues 79 to 81 (GGH), Asp99, Phe129, Asp148, and Gln155.

This sequence belongs to the methyltransferase superfamily. RsmH family.

Its subcellular location is the cytoplasm. The catalysed reaction is cytidine(1402) in 16S rRNA + S-adenosyl-L-methionine = N(4)-methylcytidine(1402) in 16S rRNA + S-adenosyl-L-homocysteine + H(+). In terms of biological role, specifically methylates the N4 position of cytidine in position 1402 (C1402) of 16S rRNA. This is Ribosomal RNA small subunit methyltransferase H 1 from Agathobacter rectalis (strain ATCC 33656 / DSM 3377 / JCM 17463 / KCTC 5835 / VPI 0990) (Eubacterium rectale).